Consider the following 381-residue polypeptide: cAMP-dependent protein kinase type I-alpha regulatory subunit (381 aa).

At M1 the chain carries N-acetylmethionine. The segment at 1–135 (MESGSTAASE…AALAKAIEKN (135 aa)) is dimerization and phosphorylation. S3 is subject to Phosphoserine. Residues 64 to 96 (QIQNLQKAGTRTDSREDEISPPPPNPVVKGRRR) form a disordered region. T75 carries the phosphothreonine modification. Residues S77 and S83 each carry the phosphoserine modification. The Pseudophosphorylation motif motif lies at 96-100 (RRGAI). S101 is modified (phosphoserine). 3',5'-cyclic AMP-binding positions include 137–254 (LFSH…SKVS), E202, R211, 255–381 (ILES…SLSV), E326, and R335. Phosphoserine is present on S258.

Belongs to the cAMP-dependent kinase regulatory chain family. As to quaternary structure, the inactive holoenzyme is composed of two regulatory chains and two catalytic chains. Activation by cAMP releases the two active catalytic monomers and the regulatory dimer. Interacts with PRKACA and PRKACB. PRKAR1A also interacts with RFC2; the complex may be involved in cell survival. Interacts with AKAP4. Interacts with RARA; the interaction occurs in the presence of cAMP or FSH and regulates RARA transcriptional activity. Interacts with the phosphorylated form of PJA2. Interacts with CBFA2T3. Interacts with PRKX; regulates this cAMP-dependent protein kinase. Interacts with smAKAP; this interaction may target PRKAR1A to the plasma membrane. Interacts with AICDA. Post-translationally, the pseudophosphorylation site binds to the substrate-binding region of the catalytic chain, resulting in the inhibition of its activity.

The protein resides in the cell membrane. Functionally, regulatory subunit of the cAMP-dependent protein kinases involved in cAMP signaling in cells. This Pongo abelii (Sumatran orangutan) protein is cAMP-dependent protein kinase type I-alpha regulatory subunit (PRKAR1A).